We begin with the raw amino-acid sequence, 339 residues long: uncharacterized protein (339 aa).

Residues isoleucine 54, lysine 78, aspartate 101, asparagine 128, tyrosine 213, and lysine 217 each coordinate NADP(+). Residue tyrosine 213 is the Proton donor of the active site. Lysine 217 serves as the catalytic Lowers pKa of active site Tyr.

The protein belongs to the short-chain dehydrogenases/reductases (SDR) family.

This is an uncharacterized protein from Schizosaccharomyces pombe (strain 972 / ATCC 24843) (Fission yeast).